We begin with the raw amino-acid sequence, 475 residues long: 7-dehydrocholesterol reductase (475 aa).

The interval Met1–Gly21 is disordered. Position 14 is a phosphoserine (Ser14). 6 consecutive transmembrane segments (helical) span residues Leu40 to Ala60, Trp151 to Ile173, Ile178 to Tyr200, Val266 to Trp286, Leu306 to Val326, and Gln331 to Phe351. NADP(+) is bound by residues Lys358, Arg362, Leu395, Trp400, and Asn407–Tyr408. A helical membrane pass occupies residues Leu420–Leu440. Residues Asp447, Cys451–Tyr455, and Tyr462 each bind NADP(+).

This sequence belongs to the ERG4/ERG24 family. In terms of assembly, interacts with DHCR24; this interaction regulates DHCR7 activity. Interacts with TMEM147.

The protein resides in the endoplasmic reticulum membrane. It carries out the reaction cholesterol + NADP(+) = 7-dehydrocholesterol + NADPH + H(+). The enzyme catalyses 7-dehydrodesmosterol + NADPH + H(+) = desmosterol + NADP(+). The catalysed reaction is 5,6alpha-epoxy-5alpha-cholestan-3beta-ol + H2O = 5alpha-cholestane-3beta,5,6beta-triol. It catalyses the reaction 5,6beta-epoxy-5beta-cholestan-3beta-ol + H2O = 5alpha-cholestane-3beta,5,6beta-triol. Its pathway is steroid biosynthesis; cholesterol biosynthesis. Functionally, oxidoreductase that catalyzes the last step of the cholesterol synthesis pathway, which transforms cholesta-5,7-dien-3beta-ol (7-dehydrocholesterol,7-DHC) into cholesterol by reducing the C7-C8 double bond of its sterol core. Can also metabolize cholesta-5,7,24-trien-3beta-ol (7-dehydrodemosterol, 7-DHD) to desmosterol, which is then metabolized by the Delta(24)-sterol reductase (DHCR24) to cholesterol. Modulates ferroptosis (a form of regulated cell death driven by iron-dependent lipid peroxidation) through the metabolic breakdown of the anti-ferroptotic metabolites 7-DHC and 7-DHD which, when accumulated, divert the propagation of peroxyl radical-mediated damage from phospholipid components to its sterol core, protecting plasma and mitochondrial membranes from phospholipid autoxidation. Its function is as follows. Component of the microsomal antiestrogen binding site (AEBS), a multiproteic complex at the ER membrane that consists of an association between cholestenol Delta-isomerase/EBP and DHCR7. This complex is responsible for cholesterol-5,6-epoxide hydrolase (ChEH) activity, which consists in the hydration of cholesterol-5,6-epoxides (5,6-EC) into cholestane-3beta,5alpha,6beta-triol (CT). The precise role of each component of this complex has not been described yet. The protein is 7-dehydrocholesterol reductase (DHCR7) of Bos taurus (Bovine).